Here is a 317-residue protein sequence, read N- to C-terminus: Olfactory receptor 2B11 (317 aa).

Residues 1-29 lie on the Extracellular side of the membrane; that stretch reads MKSDNHSFLGDSPKAFILLGVSDRPWLEL. An N-linked (GlcNAc...) asparagine glycan is attached at asparagine 5. A helical transmembrane segment spans residues 30–53; it reads PLFVVLLLSYVLAMLGNVAIILAS. The Cytoplasmic portion of the chain corresponds to 54-61; the sequence is RVDPQLHS. The chain crosses the membrane as a helical span at residues 62–83; sequence PMYIFLSHLSFLDLCYTTTTVP. The Extracellular segment spans residues 84-104; sequence QMLVNMGSSQKTISYGGCTVQ. A disulfide bridge links cysteine 101 with cysteine 193. The helical transmembrane segment at 105–124 threads the bilayer; the sequence is YAVFHWLGCTECIVLAAMAL. Residues 125–143 lie on the Cytoplasmic side of the membrane; that stretch reads DRYVAICKPLHYAVLMHRA. A helical transmembrane segment spans residues 144–162; the sequence is LCQQLVALAWLSGFGNSFV. Over 163–199 the chain is Extracellular; the sequence is QVVLTVQLPFCGRQVLNNFFCEVPAVIKLSCADTAVN. An N-linked (GlcNAc...) asparagine glycan is attached at asparagine 199. The chain crosses the membrane as a helical span at residues 200–223; the sequence is DTILAVLVAFFVLVPLALILLSYG. Topologically, residues 224–240 are cytoplasmic; the sequence is FIARAVLRIQSSKGRHK. A helical membrane pass occupies residues 241 to 263; the sequence is AFGTCSSHLMIVSLFYLPAIYMY. Residues 264–276 are Extracellular-facing; sequence LQPPSSYSQEQGK. Residues 277–296 traverse the membrane as a helical segment; it reads FISLFYSIITPTLNPFTYTL. Residues 297 to 317 are Cytoplasmic-facing; the sequence is RNKDMKGALRRLLARIWRLCG.

The protein belongs to the G-protein coupled receptor 1 family.

It localises to the cell membrane. Odorant receptor. The sequence is that of Olfactory receptor 2B11 (OR2B11) from Homo sapiens (Human).